The following is a 134-amino-acid chain: Ribonuclease P protein component (134 aa).

This sequence belongs to the RnpA family. Consists of a catalytic RNA component (M1 or rnpB) and a protein subunit.

It carries out the reaction Endonucleolytic cleavage of RNA, removing 5'-extranucleotides from tRNA precursor.. RNaseP catalyzes the removal of the 5'-leader sequence from pre-tRNA to produce the mature 5'-terminus. It can also cleave other RNA substrates such as 4.5S RNA. The protein component plays an auxiliary but essential role in vivo by binding to the 5'-leader sequence and broadening the substrate specificity of the ribozyme. This Ectopseudomonas mendocina (strain ymp) (Pseudomonas mendocina) protein is Ribonuclease P protein component.